Here is a 322-residue protein sequence, read N- to C-terminus: tRNA-specific adenosine deaminase subunit TAD3 (322 aa).

A CMP/dCMP-type deaminase domain is found at 162–283 (EVRNELSRAS…EMQRTGSLKL (122 aa)). Zn(2+) is bound by residues His216, Cys254, Cys257, and Cys322.

This sequence belongs to the cytidine and deoxycytidylate deaminase family. ADAT3 subfamily. As to quaternary structure, heterodimer with TAD2.

It is found in the cytoplasm. The protein localises to the nucleus. The protein resides in the peroxisome. Its function is as follows. Structural subunit of tRNA-specific adenosine deaminase, which deaminates adenosine-34 (the first, also called wobble position of the anticodon) to inosine in many tRNAs. Inosine-34 allows the decoding of 3 different nucleotides at the third position of mRNA codons, as inosine is able to pair with U, C, and A. The sequence is that of tRNA-specific adenosine deaminase subunit TAD3 (TAD3) from Saccharomyces cerevisiae (strain ATCC 204508 / S288c) (Baker's yeast).